Here is a 238-residue protein sequence, read N- to C-terminus: MRPADRAAQQVRPLTLTRNYTKHAEGSVLVEFGDTKVLCTATVEEGVPRFLKGQGQGWITAEYGMLPRSTHSRNAREAAKGKQGGRTLEIQRLIARSLRAAVDLKKLGEFTITLDCDVLQADGGTRTASISGACVALADALNKLVASGKLKANPMKGLVAAVSVGIVKGEALCDLEYVEDSAAETDMNVVMMEDGRMIEVQGTAEGEPFSHEELLALLDLARGGIETIFQAQKAALES.

Phosphate is bound by residues Arg-86 and 124 to 126; that span reads GTR.

The protein belongs to the RNase PH family. Homohexameric ring arranged as a trimer of dimers.

The enzyme catalyses tRNA(n+1) + phosphate = tRNA(n) + a ribonucleoside 5'-diphosphate. In terms of biological role, phosphorolytic 3'-5' exoribonuclease that plays an important role in tRNA 3'-end maturation. Removes nucleotide residues following the 3'-CCA terminus of tRNAs; can also add nucleotides to the ends of RNA molecules by using nucleoside diphosphates as substrates, but this may not be physiologically important. Probably plays a role in initiation of 16S rRNA degradation (leading to ribosome degradation) during starvation. This is Ribonuclease PH from Yersinia pseudotuberculosis serotype O:1b (strain IP 31758).